Consider the following 263-residue polypeptide: Type II restriction enzyme TthHB8I (263 aa).

It catalyses the reaction Endonucleolytic cleavage of DNA to give specific double-stranded fragments with terminal 5'-phosphates.. In terms of biological role, a P subtype restriction enzyme that recognizes the double-stranded sequence 5'-TCGA-3' and cleaves after T-1. In Thermus thermophilus (strain ATCC 27634 / DSM 579 / HB8), this protein is Type II restriction enzyme TthHB8I (tthHB8IR).